We begin with the raw amino-acid sequence, 24 residues long: ADNKNPLEECFRETNYEEFLEIAR.

It belongs to the flavin monoamine oxidase family. FIG1 subfamily. As to quaternary structure, homodimer; non-covalently linked. It depends on FAD as a cofactor. N-glycosylated. Expressed by the venom gland.

Its subcellular location is the secreted. It catalyses the reaction an L-alpha-amino acid + O2 + H2O = a 2-oxocarboxylate + H2O2 + NH4(+). Functionally, catalyzes an oxidative deamination of predominantly hydrophobic and aromatic L-amino acids, thus producing hydrogen peroxide that may contribute to the diverse toxic effects of this enzyme. Exhibits diverse biological activities, such as hemorrhage, hemolysis, edema, apoptosis, and antiparasitic activities. This protein has antibacterial activity (against E.coli, S.aureus, and B.dysenteriae), cytotoxic activity, as well as an ability to induce platelet aggregation. Effects of snake L-amino oxidases on platelets are controversial, since they either induce aggregation or inhibit agonist-induced aggregation. These different effects are probably due to different experimental conditions. This Protobothrops mucrosquamatus (Taiwan habu) protein is L-amino-acid oxidase.